Consider the following 257-residue polypeptide: Neurotrophin-3 (257 aa).

Residues 1–18 (MSILFYMIFLAYLRGIQG) form the signal peptide. The propeptide occupies 19-138 (NSMDQRRLPE…VANRTARRKR (120 aa)). A disordered region spans residues 61-81 (STLPKAEAPREPERGEPAKSE). Basic and acidic residues predominate over residues 67–79 (EAPREPERGEPAK). The N-linked (GlcNAc...) asparagine glycan is linked to Asn-131. Intrachain disulfides connect Cys-152–Cys-217, Cys-195–Cys-246, and Cys-205–Cys-248.

This sequence belongs to the NGF-beta family.

It localises to the secreted. Seems to promote the survival of visceral and proprioceptive sensory neurons. The polypeptide is Neurotrophin-3 (NTF3) (Sus scrofa (Pig)).